Reading from the N-terminus, the 402-residue chain is MDTKTFKRTLQHSENYNRKGFGHQAEVATQLQSEYQSSLIQEIRDRNYTLQRGDVTIRLAQAFGFCWGVERAVAMAYETRKHFPTERIWITNEIIHNPSVNQRMQEMQVGFIPVEAGNKDFSVVGNNDVVILPAFGASVQEMQLLSEKGCKIVDTTCPWVSKVWNTVEKHKKGDHTSIIHGKYKHEETIATSSFAGKYLIVLNLKEAQYVADYILHGGNREEFLQKFAKACSAGFDPDRDLERVGIANQTTMLKGETEQIGKLFEHTMLQKYGPVELNQHFQSFNTICDATQERQDAMLELVQENLDLMIVIGGFNSSNTTQLQQISQERGLPSYHIDVVERIKSINSIEHRQLNGELVTTENWLPAGKIVVGVTSGASTPDKVVEDVIEKIFALKATAAVF.

Cys66 provides a ligand contact to [4Fe-4S] cluster. His96 provides a ligand contact to (2E)-4-hydroxy-3-methylbut-2-enyl diphosphate. Residue His96 participates in dimethylallyl diphosphate binding. His96 lines the isopentenyl diphosphate pocket. Position 157 (Cys157) interacts with [4Fe-4S] cluster. His185 is a (2E)-4-hydroxy-3-methylbut-2-enyl diphosphate binding site. Residue His185 participates in dimethylallyl diphosphate binding. Residue His185 coordinates isopentenyl diphosphate. The Proton donor role is filled by Glu187. Thr250 lines the (2E)-4-hydroxy-3-methylbut-2-enyl diphosphate pocket. A [4Fe-4S] cluster-binding site is contributed by Cys288. 4 residues coordinate (2E)-4-hydroxy-3-methylbut-2-enyl diphosphate: Ser317, Ser318, Asn319, and Ser379. Residues Ser317, Ser318, Asn319, and Ser379 each coordinate dimethylallyl diphosphate. The isopentenyl diphosphate site is built by Ser317, Ser318, Asn319, and Ser379.

This sequence belongs to the IspH family. The cofactor is [4Fe-4S] cluster.

The enzyme catalyses isopentenyl diphosphate + 2 oxidized [2Fe-2S]-[ferredoxin] + H2O = (2E)-4-hydroxy-3-methylbut-2-enyl diphosphate + 2 reduced [2Fe-2S]-[ferredoxin] + 2 H(+). It carries out the reaction dimethylallyl diphosphate + 2 oxidized [2Fe-2S]-[ferredoxin] + H2O = (2E)-4-hydroxy-3-methylbut-2-enyl diphosphate + 2 reduced [2Fe-2S]-[ferredoxin] + 2 H(+). It functions in the pathway isoprenoid biosynthesis; dimethylallyl diphosphate biosynthesis; dimethylallyl diphosphate from (2E)-4-hydroxy-3-methylbutenyl diphosphate: step 1/1. It participates in isoprenoid biosynthesis; isopentenyl diphosphate biosynthesis via DXP pathway; isopentenyl diphosphate from 1-deoxy-D-xylulose 5-phosphate: step 6/6. Its function is as follows. Catalyzes the conversion of 1-hydroxy-2-methyl-2-(E)-butenyl 4-diphosphate (HMBPP) into a mixture of isopentenyl diphosphate (IPP) and dimethylallyl diphosphate (DMAPP). Acts in the terminal step of the DOXP/MEP pathway for isoprenoid precursor biosynthesis. The chain is 4-hydroxy-3-methylbut-2-enyl diphosphate reductase from Nostoc sp. (strain PCC 7120 / SAG 25.82 / UTEX 2576).